A 110-amino-acid polypeptide reads, in one-letter code: uncharacterized protein (110 aa).

A helical transmembrane segment spans residues 29-49 (GLAFIFFFLVAFYFFPAFWDL).

It is found in the membrane. This is an uncharacterized protein from Saccharomyces cerevisiae (strain ATCC 204508 / S288c) (Baker's yeast).